Reading from the N-terminus, the 209-residue chain is Imidazole glycerol phosphate synthase subunit HisH (209 aa).

Residues 5–209 form the Glutamine amidotransferase type-1 domain; it reads AIAIIDYDMG…LRNFVALVKD (205 aa). Cys83 functions as the Nucleophile in the catalytic mechanism. Active-site residues include His188 and Glu190.

In terms of assembly, heterodimer of HisH and HisF.

Its subcellular location is the cytoplasm. It carries out the reaction 5-[(5-phospho-1-deoxy-D-ribulos-1-ylimino)methylamino]-1-(5-phospho-beta-D-ribosyl)imidazole-4-carboxamide + L-glutamine = D-erythro-1-(imidazol-4-yl)glycerol 3-phosphate + 5-amino-1-(5-phospho-beta-D-ribosyl)imidazole-4-carboxamide + L-glutamate + H(+). It catalyses the reaction L-glutamine + H2O = L-glutamate + NH4(+). It participates in amino-acid biosynthesis; L-histidine biosynthesis; L-histidine from 5-phospho-alpha-D-ribose 1-diphosphate: step 5/9. Functionally, IGPS catalyzes the conversion of PRFAR and glutamine to IGP, AICAR and glutamate. The HisH subunit catalyzes the hydrolysis of glutamine to glutamate and ammonia as part of the synthesis of IGP and AICAR. The resulting ammonia molecule is channeled to the active site of HisF. This chain is Imidazole glycerol phosphate synthase subunit HisH, found in Thermosynechococcus vestitus (strain NIES-2133 / IAM M-273 / BP-1).